A 263-amino-acid chain; its full sequence is L-aspartate dehydrogenase (263 aa).

NAD(+) contacts are provided by Ala120 and Asn186. His216 is an active-site residue.

This sequence belongs to the L-aspartate dehydrogenase family.

It catalyses the reaction L-aspartate + NADP(+) + H2O = oxaloacetate + NH4(+) + NADPH + H(+). The catalysed reaction is L-aspartate + NAD(+) + H2O = oxaloacetate + NH4(+) + NADH + H(+). Its pathway is cofactor biosynthesis; NAD(+) biosynthesis; iminoaspartate from L-aspartate (dehydrogenase route): step 1/1. Specifically catalyzes the NAD or NADP-dependent dehydrogenation of L-aspartate to iminoaspartate. The polypeptide is L-aspartate dehydrogenase (Acinetobacter baumannii (strain AB307-0294)).